The sequence spans 393 residues: NAD(P)H-quinone oxidoreductase subunit H, chloroplastic (393 aa).

The protein belongs to the complex I 49 kDa subunit family. In terms of assembly, NDH is composed of at least 16 different subunits, 5 of which are encoded in the nucleus.

Its subcellular location is the plastid. It localises to the chloroplast thylakoid membrane. It catalyses the reaction a plastoquinone + NADH + (n+1) H(+)(in) = a plastoquinol + NAD(+) + n H(+)(out). It carries out the reaction a plastoquinone + NADPH + (n+1) H(+)(in) = a plastoquinol + NADP(+) + n H(+)(out). Its function is as follows. NDH shuttles electrons from NAD(P)H:plastoquinone, via FMN and iron-sulfur (Fe-S) centers, to quinones in the photosynthetic chain and possibly in a chloroplast respiratory chain. The immediate electron acceptor for the enzyme in this species is believed to be plastoquinone. Couples the redox reaction to proton translocation, and thus conserves the redox energy in a proton gradient. The sequence is that of NAD(P)H-quinone oxidoreductase subunit H, chloroplastic from Draba nemorosa (Woodland whitlowgrass).